Here is a 513-residue protein sequence, read N- to C-terminus: Maturase K (513 aa).

Belongs to the intron maturase 2 family. MatK subfamily.

The protein resides in the plastid. It is found in the chloroplast. In terms of biological role, usually encoded in the trnK tRNA gene intron. Probably assists in splicing its own and other chloroplast group II introns. The protein is Maturase K of Typha latifolia (Bulrush).